The sequence spans 148 residues: MARGLRGLPRRGLWLLLVNHLFLATACQDTDHAALLRKYCLPQFQVDMEAIGKALWCDWDKTIGSYKDLSDCTRLVAQRLDCFWPNAAVDKFFLGVHQQYFRNCPVSGRALQDPPSSVLCPFIVVPILATLLMTALVVWRSKRPEGIV.

The signal sequence occupies residues 1 to 26 (MARGLRGLPRRGLWLLLVNHLFLATA). Intrachain disulfides connect Cys27-Cys82, Cys40-Cys72, and Cys57-Cys104. At 27–118 (CQDTDHAALL…RALQDPPSSV (92 aa)) the chain is on the extracellular side. The helical transmembrane segment at 119-140 (LCPFIVVPILATLLMTALVVWR) threads the bilayer. Residues 141–148 (SKRPEGIV) lie on the Cytoplasmic side of the membrane.

This sequence belongs to the RAMP family. In terms of assembly, heterodimer of CALCRL and RAMP1; the interaction induces allosteric modulation of CALCRL function and CGRP1/CALCA and CGRP2/CALCB ligand specificity. Heterodimer of CALCR and RAMP1; interaction forms the AMYR1 receptor complex for amylin/IAPP and CGRP1/CALCA ligands.

The protein resides in the cell membrane. In terms of biological role, accessory protein that interacts with and modulates the function of G-protein coupled receptors including calcitonin gene-related peptide type 1 receptor (CALCRL) and calcitonin receptor (CALCR). Required for the transport of CALCRL to the plasma membrane. Together with CALCRL, form the receptor complex for the calcitonin gene-related peptides CGRP1/CALCA and CGRP2/CALCB. Together with CALCR, form the AMYR1 receptor complex for amylin/IAPP and CGRP1/CALCA. The polypeptide is Receptor activity-modifying protein 1 (RAMP1) (Sus scrofa (Pig)).